A 761-amino-acid polypeptide reads, in one-letter code: Xaa-Pro dipeptidyl-peptidase (761 aa).

Catalysis depends on charge relay system residues Ser349, Asp469, and His499.

Belongs to the peptidase S15 family. Homodimer.

The protein resides in the cytoplasm. The catalysed reaction is Hydrolyzes Xaa-Pro-|- bonds to release unblocked, N-terminal dipeptides from substrates including Ala-Pro-|-p-nitroanilide and (sequentially) Tyr-Pro-|-Phe-Pro-|-Gly-Pro-|-Ile.. In terms of biological role, removes N-terminal dipeptides sequentially from polypeptides having unsubstituted N-termini provided that the penultimate residue is proline. This chain is Xaa-Pro dipeptidyl-peptidase, found in Streptococcus equi subsp. zooepidemicus (strain H70).